Reading from the N-terminus, the 486-residue chain is Glutamyl-tRNA(Gln) amidotransferase subunit A (486 aa).

Residues K75 and S150 each act as charge relay system in the active site. The active-site Acyl-ester intermediate is S174.

This sequence belongs to the amidase family. GatA subfamily. In terms of assembly, heterotrimer of A, B and C subunits.

The enzyme catalyses L-glutamyl-tRNA(Gln) + L-glutamine + ATP + H2O = L-glutaminyl-tRNA(Gln) + L-glutamate + ADP + phosphate + H(+). Allows the formation of correctly charged Gln-tRNA(Gln) through the transamidation of misacylated Glu-tRNA(Gln) in organisms which lack glutaminyl-tRNA synthetase. The reaction takes place in the presence of glutamine and ATP through an activated gamma-phospho-Glu-tRNA(Gln). In Nostoc sp. (strain PCC 7120 / SAG 25.82 / UTEX 2576), this protein is Glutamyl-tRNA(Gln) amidotransferase subunit A.